The sequence spans 295 residues: Ribosomal protein L11 methyltransferase (295 aa).

4 residues coordinate S-adenosyl-L-methionine: T146, G167, D189, and N231.

It belongs to the methyltransferase superfamily. PrmA family.

Its subcellular location is the cytoplasm. It carries out the reaction L-lysyl-[protein] + 3 S-adenosyl-L-methionine = N(6),N(6),N(6)-trimethyl-L-lysyl-[protein] + 3 S-adenosyl-L-homocysteine + 3 H(+). Methylates ribosomal protein L11. The sequence is that of Ribosomal protein L11 methyltransferase from Vibrio cholerae serotype O1 (strain M66-2).